Reading from the N-terminus, the 122-residue chain is Large ribosomal subunit protein bL12 (122 aa).

Belongs to the bacterial ribosomal protein bL12 family. As to quaternary structure, homodimer. Part of the ribosomal stalk of the 50S ribosomal subunit. Forms a multimeric L10(L12)X complex, where L10 forms an elongated spine to which 2 to 4 L12 dimers bind in a sequential fashion. Binds GTP-bound translation factors.

In terms of biological role, forms part of the ribosomal stalk which helps the ribosome interact with GTP-bound translation factors. Is thus essential for accurate translation. This Borrelia hermsii (strain HS1 / DAH) protein is Large ribosomal subunit protein bL12.